The sequence spans 49 residues: Large ribosomal subunit protein bL33A (49 aa).

Belongs to the bacterial ribosomal protein bL33 family.

The protein is Large ribosomal subunit protein bL33A of Geobacillus thermodenitrificans (strain NG80-2).